The primary structure comprises 864 residues: DNA mismatch repair protein MutS (864 aa).

623–630 (GPNMGGKS) provides a ligand contact to ATP.

This sequence belongs to the DNA mismatch repair MutS family.

Functionally, this protein is involved in the repair of mismatches in DNA. It is possible that it carries out the mismatch recognition step. This protein has a weak ATPase activity. This Polaromonas sp. (strain JS666 / ATCC BAA-500) protein is DNA mismatch repair protein MutS.